The chain runs to 365 residues: Histidinol-phosphate aminotransferase (365 aa).

Residue lysine 227 is modified to N6-(pyridoxal phosphate)lysine.

It belongs to the class-II pyridoxal-phosphate-dependent aminotransferase family. Histidinol-phosphate aminotransferase subfamily. As to quaternary structure, homodimer. It depends on pyridoxal 5'-phosphate as a cofactor.

The enzyme catalyses L-histidinol phosphate + 2-oxoglutarate = 3-(imidazol-4-yl)-2-oxopropyl phosphate + L-glutamate. The protein operates within amino-acid biosynthesis; L-histidine biosynthesis; L-histidine from 5-phospho-alpha-D-ribose 1-diphosphate: step 7/9. In Campylobacter concisus (strain 13826), this protein is Histidinol-phosphate aminotransferase.